The following is a 239-amino-acid chain: tRNA (guanine-N(7)-)-methyltransferase (239 aa).

Residues glutamate 69, glutamate 94, aspartate 121, and aspartate 144 each contribute to the S-adenosyl-L-methionine site. Residue aspartate 144 is part of the active site. Residue lysine 148 coordinates substrate. Residues 150 to 155 (RHNKRR) form an interaction with RNA region. Substrate contacts are provided by residues aspartate 180 and 217–220 (TKFE).

The protein belongs to the class I-like SAM-binding methyltransferase superfamily. TrmB family. As to quaternary structure, monomer.

It carries out the reaction guanosine(46) in tRNA + S-adenosyl-L-methionine = N(7)-methylguanosine(46) in tRNA + S-adenosyl-L-homocysteine. Its pathway is tRNA modification; N(7)-methylguanine-tRNA biosynthesis. Catalyzes the formation of N(7)-methylguanine at position 46 (m7G46) in tRNA. This chain is tRNA (guanine-N(7)-)-methyltransferase, found in Escherichia coli O6:K15:H31 (strain 536 / UPEC).